We begin with the raw amino-acid sequence, 2005 residues long: Chitin synthase 8 (2005 aa).

Residues 5–773 (DEVAKLSQLT…AFRELEDELR (769 aa)) enclose the Myosin motor domain. An ATP-binding site is contributed by 108–115 (GDTSSGKS). 4 N-linked (GlcNAc...) asparagine glycosylation sites follow: asparagine 164, asparagine 364, asparagine 390, and asparagine 546. The interval 585-631 (QSVKPMRAPSTRRPNRGNTIKRTNTIKKADDDDSDEDAADAADASTS) is disordered. Residues 615 to 624 (DDDSDEDAAD) are compositionally biased toward acidic residues. The tract at residues 647-669 (LDLLLETLEDTKTWFTLCLRPND) is actin-binding. 2 helical membrane-spanning segments follow: residues 929–949 (KWVA…LSRF) and 965–985 (LAIN…IVVL). An N-linked (GlcNAc...) asparagine glycan is attached at asparagine 1076. A run of 3 helical transmembrane segments spans residues 1232–1252 (ILLA…LAAL), 1604–1624 (LIFT…IVFI), and 1626–1646 (LLST…IVLV). Asparagine 1650 carries an N-linked (GlcNAc...) asparagine glycan. The next 2 helical transmembrane spans lie at 1653-1673 (VPLT…VIFL) and 1680-1700 (MIGW…FLPL). Asparagine 1770 and asparagine 1794 each carry an N-linked (GlcNAc...) asparagine glycan. The tract at residues 1796 to 1821 (SFGHSPSPSYGGTPSQFGAFAPGPGS) is disordered. Over residues 1797–1811 (FGHSPSPSYGGTPSQ) the composition is skewed to polar residues. N-linked (GlcNAc...) asparagine glycosylation is present at asparagine 1882. Residues 1912 to 1950 (FATAEQQQQQQQQQQAAGLSGSGGSKSPPREAVAGGLPS) are disordered. Low complexity predominate over residues 1917-1930 (QQQQQQQQQQAAGL). The region spanning 1948–2003 (LPSDSQIKLDIRSLIAESDLTTITKKQLRAKLEQKYATSIESKKAFINSEIENVLS) is the DEK-C domain.

In the N-terminal section; belongs to the TRAFAC class myosin-kinesin ATPase superfamily. Myosin family. The protein in the C-terminal section; belongs to the chitin synthase family. Class V subfamily.

Its subcellular location is the cell membrane. It localises to the cytoplasmic vesicle membrane. The protein resides in the cell tip. It catalyses the reaction [(1-&gt;4)-N-acetyl-beta-D-glucosaminyl](n) + UDP-N-acetyl-alpha-D-glucosamine = [(1-&gt;4)-N-acetyl-beta-D-glucosaminyl](n+1) + UDP + H(+). Its function is as follows. Polymerizes chitin, a structural polymer of the cell wall and septum, by transferring the sugar moiety of UDP-GlcNAc to the non-reducing end of the growing chitin polymer. Involved in mating tube and dikaryotic hyphae formation and required for the formation of invading hyphae during plant infection. This chain is Chitin synthase 8, found in Mycosarcoma maydis (Corn smut fungus).